The following is a 321-amino-acid chain: NADPH-dependent codeinone reductase 1-1 (321 aa).

Residues Thr27 and Asp51 each contribute to the NADPH site. Catalysis depends on proton donor residues Tyr56 and His119. His119 lines the substrate pocket. Residues Gln187, Ser214, Leu216, Ser264, and Arg269 each coordinate NADPH.

This sequence belongs to the aldo/keto reductase family. Latex secreting cells (laticifer cells). Expressed constitutively and ubiquitously with highest levels in capsules. Restricted to the parietal region of sieve elements adjacent or proximal to laticifers in roots, stems, leaves and carpels.

Its subcellular location is the cytoplasm. The protein resides in the cytosol. It carries out the reaction codeine + NADP(+) = codeinone + NADPH + H(+). It catalyses the reaction neopine + NADP(+) = neopinone + NADPH + H(+). The catalysed reaction is morphine + NADP(+) = morphinone + NADPH + H(+). The enzyme catalyses neomorphine + NADP(+) = neomorphinone + NADPH + H(+). It participates in alkaloid biosynthesis; morphine biosynthesis. In terms of biological role, NADPH-dependent reductase involved in biosynthesis of morphinan-type benzylisoquinoline and opiate alkaloids natural products. Reduces codeinone to codeine in the penultimate step in morphine biosynthesis. Can use morphinone, hydrocodone and hydromorphone as substrate during reductive reaction with NADPH as cofactor, and morphine and dihydrocodeine as substrate during oxidative reaction with NADP as cofactor. Converts morphinone to morphine, and neomorphinone to neomorphine. Reduces irreversibly neopinone, a spontaneous isomer of codeinone, to neopine; in planta, neopine levels are limited to low levels. The chain is NADPH-dependent codeinone reductase 1-1 from Papaver somniferum (Opium poppy).